Reading from the N-terminus, the 1073-residue chain is Activated Cdc42 kinase Ack (1073 aa).

The disordered stretch occupies residues 88 to 110; sequence IGGGKQPSSKKQSSAARESSQGN. The Protein kinase domain occupies 123 to 383; the sequence is ITMGLKLGDG…PTFAALKEYL (261 aa). Residues 129 to 137 and lysine 156 contribute to the ATP site; that span reads LGDGSFGVV. The active-site Proton acceptor is the aspartate 250. In terms of domain architecture, SH3 spans 386–446; that stretch reads MSPPVMRASR…PRNLLEQRKV (61 aa). Disordered regions lie at residues 484-506, 803-834, and 862-882; these read QRKC…SSKQ, PLKN…VEAA, and AQPP…HQQQ. Low complexity predominate over residues 812–826; sequence SVHSNHSSPSSTASP. In terms of domain architecture, UBA spans 1029–1072; the sequence is GLATRHYKIDQLARLGVAGRPQCEQALQQTNWSLEVAAELLLNA.

Belongs to the protein kinase superfamily. Tyr protein kinase family. In terms of assembly, interacts with yki and ex. Interacts with drk. Likely to be a member of an axonal guidance receptor complex that includes SH3PX1, dock and Dscam. Interacts (via N-terminus) with dock. Interacts with SH3PX1 (via SH3 domain). Requires Mg(2+) as cofactor. Phosphorylated. Autophosphorylated. Detected in ovaries (at protein level). In adults, relatively higher expression in the head compared to the body.

It localises to the cytoplasm. The protein localises to the cytoplasmic vesicle. The protein resides in the clathrin-coated vesicle. It carries out the reaction L-tyrosyl-[protein] + ATP = O-phospho-L-tyrosyl-[protein] + ADP + H(+). It catalyses the reaction L-threonyl-[protein] + ATP = O-phospho-L-threonyl-[protein] + ADP + H(+). In terms of biological role, non-receptor tyrosine-protein and serine/threonine-protein kinase that is implicated in diverse biological functions such as cell survival, cell differentiation, cell growth and proliferation. Phosphorylates SH3PX1 and ex. Phosphorylates SH3PX1 predominantly on 'Tyr-56', which likely promotes the recruitment of SH3PX1 to an axonal guidance receptor complex that includes dock and Dscam; because phosphorylation of SH3PX1 increases its interaction with the complex member dock while decreasing its interaction with the actin cytoskeleton modulator WASp. In the wing and eye, promotes tissue growth, and during embryogenesis coordinates cell shape changes required for correct dorsal closure. Functions in the negative regulation of the Hippo/SWH (Sav/Wts/Hpo) signaling pathway by enhancing yki activity thereby promoting cell proliferation and inhibiting apoptosis. This is accomplished, at least in part, by phosphorylating ex thereby reducing its ability to efficiently activate the Hippo signaling cascade. In the eye disk, wing disk and possibly spermatids, inhibits programmed cell death induced by hid and rpr through a mechanism that is independent of the MAP kinase signal transduction pathway. Essential for male and female fertility. During oogenesis required for the correct temporal assembly, and consequently the catalytic activity of long Ctps filaments (cytoophidium) in the germline nurse cells, likely by phosphorylating an unidentified substrate that is essential for linking individual Ctps filaments into large, catalytically active assemblies. The protein is Activated Cdc42 kinase Ack of Drosophila melanogaster (Fruit fly).